Reading from the N-terminus, the 151-residue chain is HTH-type transcriptional regulator FL11 (151 aa).

The HTH asnC-type domain occupies 5 to 66 (LDEIDRRIIK…IVNPEALGYS (62 aa)). A DNA-binding region (H-T-H motif) is located at residues 24 to 43 (LREISKITGLAESTIHERIK). 98-104 (ETTGDYD) contacts L-arginine. Residues Asn118, Asp122, and 133 to 135 (THT) each bind L-lysine. L-arginine is bound by residues Asp122 and 133–135 (THT).

Homodimer. Binds DNA as a dimer and an octamer.

With respect to regulation, in the famine mode, FL11 forms dimers and acts as a repressor, leading to growth arrest. In the feast mode, in the presence of high concentrations of lysine or arginine, four dimers assemble into an octamer and cover the fl11 and lysine biosynthesis promoters. This leads to the inhibition of fl11 expression and lysine biosynthesis, decrease of the FL11 concentration in the cell, derepression of the target genes and activation of the metabolism. Functionally, DNA-binding protein involved in the repression of transcription of a large number of genes, thereby arresting growth, in response to environmental changes. The polypeptide is HTH-type transcriptional regulator FL11 (Pyrococcus abyssi (strain GE5 / Orsay)).